Consider the following 293-residue polypeptide: Acetylglutamate kinase (293 aa).

Substrate-binding positions include 68–69, Arg-90, and Asn-189; that span reads GG.

The protein belongs to the acetylglutamate kinase family. ArgB subfamily.

The protein localises to the cytoplasm. It catalyses the reaction N-acetyl-L-glutamate + ATP = N-acetyl-L-glutamyl 5-phosphate + ADP. Its pathway is amino-acid biosynthesis; L-arginine biosynthesis; N(2)-acetyl-L-ornithine from L-glutamate: step 2/4. Catalyzes the ATP-dependent phosphorylation of N-acetyl-L-glutamate. This is Acetylglutamate kinase from Mycolicibacterium smegmatis (strain ATCC 700084 / mc(2)155) (Mycobacterium smegmatis).